The following is a 161-amino-acid chain: Nucleotide-binding protein Nmul_A1044 (161 aa).

Belongs to the YajQ family.

Nucleotide-binding protein. The chain is Nucleotide-binding protein Nmul_A1044 from Nitrosospira multiformis (strain ATCC 25196 / NCIMB 11849 / C 71).